The sequence spans 278 residues: Probable endonuclease 4 (278 aa).

Residues His-66, His-106, Glu-142, Asp-176, His-179, His-213, Asp-226, His-228, and Glu-258 each contribute to the Zn(2+) site.

Belongs to the AP endonuclease 2 family. It depends on Zn(2+) as a cofactor.

It catalyses the reaction Endonucleolytic cleavage to 5'-phosphooligonucleotide end-products.. Functionally, endonuclease IV plays a role in DNA repair. It cleaves phosphodiester bonds at apurinic or apyrimidinic (AP) sites, generating a 3'-hydroxyl group and a 5'-terminal sugar phosphate. This chain is Probable endonuclease 4, found in Halothermothrix orenii (strain H 168 / OCM 544 / DSM 9562).